Consider the following 292-residue polypeptide: NAD kinase (292 aa).

The Proton acceptor role is filled by D72. NAD(+)-binding positions include D72–G73, N146–E147, H157, R174, D176, and T187–S192.

Belongs to the NAD kinase family. The cofactor is a divalent metal cation.

It is found in the cytoplasm. The enzyme catalyses NAD(+) + ATP = ADP + NADP(+) + H(+). Its function is as follows. Involved in the regulation of the intracellular balance of NAD and NADP, and is a key enzyme in the biosynthesis of NADP. Catalyzes specifically the phosphorylation on 2'-hydroxyl of the adenosine moiety of NAD to yield NADP. In Shewanella oneidensis (strain ATCC 700550 / JCM 31522 / CIP 106686 / LMG 19005 / NCIMB 14063 / MR-1), this protein is NAD kinase.